The following is a 316-amino-acid chain: Glutathione synthetase (316 aa).

Residues 125–310 (KLFTAWFSDL…ITGMLMDAIE (186 aa)) form the ATP-grasp domain. 151 to 207 (WEKHSDIILKPLDGMGGASIFRVKEGDPNLGVIAETLTEHGTRYCMAQNYLPAIKDG) provides a ligand contact to ATP. 2 residues coordinate Mg(2+): E281 and N283.

Belongs to the prokaryotic GSH synthase family. The cofactor is Mg(2+). It depends on Mn(2+) as a cofactor.

It carries out the reaction gamma-L-glutamyl-L-cysteine + glycine + ATP = glutathione + ADP + phosphate + H(+). It functions in the pathway sulfur metabolism; glutathione biosynthesis; glutathione from L-cysteine and L-glutamate: step 2/2. The polypeptide is Glutathione synthetase (Escherichia coli O6:H1 (strain CFT073 / ATCC 700928 / UPEC)).